The chain runs to 251 residues: Chlorophyll a-b binding protein 4, chloroplastic (251 aa).

The residue at position 35 (Ser-35) is a Phosphoserine. Residue Trp-57 coordinates chlorophyll b. Chlorophyll a-binding residues include Phe-77 and Glu-96. Position 101 (Arg-101) interacts with chlorophyll b. 2 helical membrane passes run 102-122 (WAMLGVAGMLLPEVFTKIGII) and 135-155 (YFASSSTLFVIEFILFHYVEI). Ser-138, Val-144, Glu-154, and Arg-157 together coordinate chlorophyll b. Chlorophyll a contacts are provided by Lys-204, Glu-205, Asn-208, Arg-210, Gln-222, and His-237.

This sequence belongs to the light-harvesting chlorophyll a/b-binding (LHC) protein family. The LHC complex consists of chlorophyll a-b binding proteins. Red-emitting heterodimer with LHCA1. Requires Binds at least 14 chlorophylls (8 Chl-a and 6 Chl-b) and carotenoids such as lutein and neoxanthin. as cofactor. In terms of processing, photoregulated by reversible phosphorylation of its threonine residues.

The protein resides in the plastid. Its subcellular location is the chloroplast thylakoid membrane. In terms of biological role, the light-harvesting complex (LHC) functions as a light receptor, it captures and delivers excitation energy to photosystems with which it is closely associated. The sequence is that of Chlorophyll a-b binding protein 4, chloroplastic from Arabidopsis thaliana (Mouse-ear cress).